A 209-amino-acid chain; its full sequence is Orotate phosphoribosyltransferase (209 aa).

5-phospho-alpha-D-ribose 1-diphosphate-binding positions include Arg96, Lys100, His102, and Glu122–Ser130. Residue Ser126 coordinates orotate.

This sequence belongs to the purine/pyrimidine phosphoribosyltransferase family. PyrE subfamily. Homodimer. Mg(2+) serves as cofactor.

It catalyses the reaction orotidine 5'-phosphate + diphosphate = orotate + 5-phospho-alpha-D-ribose 1-diphosphate. It participates in pyrimidine metabolism; UMP biosynthesis via de novo pathway; UMP from orotate: step 1/2. Catalyzes the transfer of a ribosyl phosphate group from 5-phosphoribose 1-diphosphate to orotate, leading to the formation of orotidine monophosphate (OMP). This Listeria innocua serovar 6a (strain ATCC BAA-680 / CLIP 11262) protein is Orotate phosphoribosyltransferase.